Consider the following 148-residue polypeptide: Large ribosomal subunit protein uL15 (148 aa).

Over residues 1–30 the composition is skewed to basic residues; the sequence is MPSKLRKTRKLRGHVSHGHGRIGKHRKHPG. Positions 1–38 are disordered; it reads MPSKLRKTRKLRGHVSHGHGRIGKHRKHPGGRGNAGGM.

The protein belongs to the universal ribosomal protein uL15 family. In terms of assembly, component of the large ribosomal subunit.

It is found in the cytoplasm. Functionally, component of the large ribosomal subunit. The ribosome is a large ribonucleoprotein complex responsible for the synthesis of proteins in the cell. In Xenopus laevis (African clawed frog), this protein is Large ribosomal subunit protein uL15 (rpl27a).